The primary structure comprises 189 residues: Mu-like prophage FluMu protein gp27 (189 aa).

The protein to phage Mu protein gp27.

In Haemophilus influenzae (strain ATCC 51907 / DSM 11121 / KW20 / Rd), this protein is Mu-like prophage FluMu protein gp27.